The following is a 542-amino-acid chain: uncharacterized protein (542 aa).

Residues 1-78 (MSVQKEEYDI…EEKKLVRKMD (78 aa)) lie on the Extracellular side of the membrane. Residues 79-99 (LKIFLWVFIMFAFLDLIRKNI) traverse the membrane as a helical segment. The Cytoplasmic portion of the chain corresponds to 100-119 (ARAVSDNFIVDLKMNTNDYN). The helical transmembrane segment at 120–140 (LGQTVYLVIFLASELPGNLLS) threads the bilayer. The Extracellular portion of the chain corresponds to 141–147 (KRFGPER). A helical membrane pass occupies residues 148–168 (VIPVQIVLWSVICITQAGLKN). Residues 169 to 176 (RGQFIATR) are Cytoplasmic-facing. The chain crosses the membrane as a helical span at residues 177-197 (CLLGMVQGGFIPDNILYLSYY). At 198–208 (YTGAELTFRLS) the chain is on the extracellular side. Residues 209–229 (FFWCAIPLFQILGSLLASGII) traverse the membrane as a helical segment. The Cytoplasmic portion of the chain corresponds to 230–241 (EMRGIHNLAGWQ). The chain crosses the membrane as a helical span at residues 242–262 (YLFIIEGFLSLSVGVASFYLM). At 263 to 326 (RRGPTQTGES…TLTEFDLWPL (64 aa)) the chain is on the extracellular side. A helical transmembrane segment spans residues 327-347 (FIQGITAFISLQTVGSYLSLI). The Cytoplasmic portion of the chain corresponds to 348–359 (LKSLNYSTFLSN). A helical membrane pass occupies residues 360–380 (ILAIPGQALLLINLPLAALLS). Topologically, residues 381–387 (RKLKEKS) are extracellular. A helical membrane pass occupies residues 388–408 (LCVGIANVWVLPFIVSLVALP). Residues 409-416 (TDTNPWIK) are Cytoplasmic-facing. The chain crosses the membrane as a helical span at residues 417-437 (YILLTGILGLPYTHSILAGWV). Topologically, residues 438–482 (SEISNSVRSRTVGTALYNMSAQVGAIIASNMYRNDDKPYYTRGNK) are extracellular. The chain crosses the membrane as a helical span at residues 483-503 (ILLGFTCFNICMAVATKFYYI). Residues 504-542 (SRNKYKDRKWNSMTKEEQINYLDTTKDKGMKRLDYRFIH) lie on the Cytoplasmic side of the membrane.

Belongs to the major facilitator superfamily. Allantoate permease family.

It is found in the membrane. This is an uncharacterized protein from Saccharomyces cerevisiae (strain ATCC 204508 / S288c) (Baker's yeast).